The chain runs to 61 residues: MDPNCSCSTGSTCTCSSSCGCKDCKCTSCKKSCCSCCPVGCSKCAQGCVCKGASDKCTCCA.

Methionine 1 carries the post-translational modification N-acetylmethionine. A beta region spans residues 1 to 29 (MDPNCSCSTGSTCTCSSSCGCKDCKCTSC). A divalent metal cation is bound by residues cysteine 5, cysteine 7, cysteine 13, cysteine 15, cysteine 19, cysteine 21, cysteine 24, cysteine 26, cysteine 29, cysteine 33, cysteine 34, cysteine 36, cysteine 37, cysteine 41, cysteine 44, cysteine 48, cysteine 50, cysteine 57, cysteine 59, and cysteine 60. The tract at residues 30–61 (KKSCCSCCPVGCSKCAQGCVCKGASDKCTCCA) is alpha.

It belongs to the metallothionein superfamily. Type 1 family.

Metallothioneins have a high content of cysteine residues that bind various heavy metals; these proteins are transcriptionally regulated by both heavy metals and glucocorticoids. The polypeptide is Metallothionein-1 (MT1) (Cricetulus griseus (Chinese hamster)).